Reading from the N-terminus, the 861-residue chain is Importin subunit beta-1 (861 aa).

Residue Ser2 is modified to N-acetylserine. HEAT repeat units lie at residues 3–35 (TAEFAQLLENSILSPDQNIRLTSETQLKKLSND), 37–66 (FLQFAGLSSQVLIDENTKLEGRILAALTLK), 90–129 (PEAKNQIKTNALTALVSIEPRIANAAAQLIAAIADIELPH), 134–164 (ELMKIMVDNTGAEQPENVKRASLLALGYMCE), 177–208 (SNNILIAIVQGAQSTETSKAVRLAALNALADS), 219–255 (EGERNYLMQVVCEATQAEDIEVQAAAFGCLCKIMSLY), 260–306 (KPYM…ELAQ), 317–362 (FALS…AQNC), 367–395 (LEPVLEFVEQNITADNWRNREAAVMAFGS), 402–442 (KVQR…ADSV), 452–484 (LPGVVQACLIGLQDHPKVATNCSWTIINLVEQL), 496–530 (YPALVDGLIGAANRIDNEFNARASAFSALTTMVEY), 536–586 (AETS…VIRK), 592–629 (EPVADMLMGLFFRLLEKKDSAFIEDDVFYAISALAASL), 634–669 (EKYLETFSPYLLKALNQVDSPVSITAVGFIADISNS), 675–713 (RRYSDAMMNVLAQMISNPNARRELKPAVLSVFGDIASNI), 718–764 (IPYL…IVAG), 773–812 (FPYVGTIFQFIAQVAEDPQLYSEDATSRAAVGLIGDIAAM), and 819–859 (KQFY…KRQL). In terms of domain architecture, Importin N-terminal spans 25-106 (SETQLKKLSN…KTNALTALVS (82 aa)). Ser836 carries the phosphoserine modification.

The protein belongs to the importin beta family. Importin beta-1 subfamily. As to quaternary structure, forms a complex with the importin alpha subunit (SRP1/KAP60). Interacts with Ran (GSP1); interacts specifically with the GTP-bound form of Ran (GTP-Ran), protecting it from GTP hydrolysis and nucleotide exchange. Interacts with nucleoporin NUP1.

It localises to the cytoplasm. It is found in the nucleus. The protein resides in the nuclear pore complex. Importin beta subunit that functions in nuclear protein import through association with the importin alpha subunit, which binds to the classical nuclear localization signal (cNLS) in cargo substrates. Docking of the importin/substrate complex to the nuclear pore complex (NPC) is mediated by importin beta through binding to nucleoporin FxFG repeats and the complex is subsequently translocated through the pore by an energy requiring, Ran-dependent mechanism. At the nucleoplasmic side of the NPC, GTP-Ran binds to importin beta and the three components separate, leading to release of the cargo. Importin alpha and beta are re-exported from the nucleus to the cytoplasm where GTP hydrolysis releases Ran from importin beta. The directionality of nuclear import is thought to be conferred by an asymmetric distribution of the GTP- and GDP-bound forms of Ran between the cytoplasm and nucleus. Mediates the nuclear import of histones H2A and H2B. Mediates the nuclear import of transcription factor GCN4. This chain is Importin subunit beta-1, found in Saccharomyces cerevisiae (strain ATCC 204508 / S288c) (Baker's yeast).